The following is a 1563-amino-acid chain: Pentafunctional AROM polypeptide (1563 aa).

The 3-dehydroquinate synthase stretch occupies residues 1 to 382; that stretch reads MAEPISNPTR…YEPKASVVED (382 aa). Residues 48 to 50, 82 to 85, 113 to 115, and Asp-118 each bind NAD(+); these read DTN, EYSK, and GGV. 7-phospho-2-dehydro-3-deoxy-D-arabino-heptonate is bound at residue Arg-129. NAD(+) is bound at residue 138–139; the sequence is TT. Residues Asp-145 and Lys-151 each contribute to the 7-phospho-2-dehydro-3-deoxy-D-arabino-heptonate site. Lys-160 provides a ligand contact to NAD(+). Position 161 (Asn-161) interacts with 7-phospho-2-dehydro-3-deoxy-D-arabino-heptonate. NAD(+)-binding positions include 178 to 181 and Asn-189; that span reads FLNT. A Zn(2+)-binding site is contributed by Glu-193. 7-phospho-2-dehydro-3-deoxy-D-arabino-heptonate contacts are provided by residues 193 to 196 and Lys-248; that span reads EVIK. Residue Glu-258 is the Proton acceptor; for 3-dehydroquinate synthase activity of the active site. Residues 262–266 and His-269 each bind 7-phospho-2-dehydro-3-deoxy-D-arabino-heptonate; that span reads RNLLN. His-269 is a Zn(2+) binding site. His-273 serves as the catalytic Proton acceptor; for 3-dehydroquinate synthase activity. Positions 285 and 354 each coordinate 7-phospho-2-dehydro-3-deoxy-D-arabino-heptonate. His-285 is a Zn(2+) binding site. Residues 395–834 are EPSP synthase; that stretch reads VFAGVPKDLN…WDTMSNYFKV (440 aa). Catalysis depends on Cys-816, which acts as the For EPSP synthase activity. Positions 857–1051 are shikimate kinase; the sequence is PKSIFIIGMR…KKKPHSFFVS (195 aa). Residue 864–871 participates in ATP binding; it reads GMRGAGKS. A 3-dehydroquinase region spans residues 1052–1265; sequence LTVPNVSKAL…AAPGQLSAAE (214 aa). Residue His-1168 is the Proton acceptor; for 3-dehydroquinate dehydratase activity of the active site. Lys-1196 functions as the Schiff-base intermediate with substrate; for 3-dehydroquinate dehydratase activity in the catalytic mechanism. A shikimate dehydrogenase region spans residues 1278–1563; it reads PRSFHLFGNP…TDAQAAVMGN (286 aa).

This sequence in the N-terminal section; belongs to the sugar phosphate cyclases superfamily. Dehydroquinate synthase family. It in the 2nd section; belongs to the EPSP synthase family. The protein in the 3rd section; belongs to the shikimate kinase family. In the 4th section; belongs to the type-I 3-dehydroquinase family. This sequence in the C-terminal section; belongs to the shikimate dehydrogenase family. Homodimer. Requires Zn(2+) as cofactor.

The protein resides in the cytoplasm. It carries out the reaction 7-phospho-2-dehydro-3-deoxy-D-arabino-heptonate = 3-dehydroquinate + phosphate. It catalyses the reaction 3-dehydroquinate = 3-dehydroshikimate + H2O. The catalysed reaction is shikimate + NADP(+) = 3-dehydroshikimate + NADPH + H(+). The enzyme catalyses shikimate + ATP = 3-phosphoshikimate + ADP + H(+). It carries out the reaction 3-phosphoshikimate + phosphoenolpyruvate = 5-O-(1-carboxyvinyl)-3-phosphoshikimate + phosphate. It participates in metabolic intermediate biosynthesis; chorismate biosynthesis; chorismate from D-erythrose 4-phosphate and phosphoenolpyruvate: step 2/7. Its pathway is metabolic intermediate biosynthesis; chorismate biosynthesis; chorismate from D-erythrose 4-phosphate and phosphoenolpyruvate: step 3/7. It functions in the pathway metabolic intermediate biosynthesis; chorismate biosynthesis; chorismate from D-erythrose 4-phosphate and phosphoenolpyruvate: step 4/7. The protein operates within metabolic intermediate biosynthesis; chorismate biosynthesis; chorismate from D-erythrose 4-phosphate and phosphoenolpyruvate: step 5/7. It participates in metabolic intermediate biosynthesis; chorismate biosynthesis; chorismate from D-erythrose 4-phosphate and phosphoenolpyruvate: step 6/7. Functionally, the AROM polypeptide catalyzes 5 consecutive enzymatic reactions in prechorismate polyaromatic amino acid biosynthesis. In Neurospora crassa (strain ATCC 24698 / 74-OR23-1A / CBS 708.71 / DSM 1257 / FGSC 987), this protein is Pentafunctional AROM polypeptide.